The sequence spans 323 residues: Sporulation-delaying protein SdpB (323 aa).

Helical transmembrane passes span 27 to 49 (LLGFSTLLVLLFNSTDILFSYSA), 70 to 92 (SINFEIIRYLMIFILTLVVIGWR), 112 to 134 (LTIDGGEQIATVLSFLILPVTLL), 155 to 177 (TVLFYIMTIIKIQVFIIYLNAAL), 219 to 241 (IVVITWLVTIFELFLAASIISNI), and 248 to 270 (LVLGILFHIGIIFSIGIVSFGLI).

It localises to the cell membrane. Its function is as follows. Required for the maturation of SdpC to SDP. Not required for SdpC signal peptide cleavage, secretion from the cell or disulfide bond formation. This is Sporulation-delaying protein SdpB from Bacillus subtilis (strain 168).